The sequence spans 61 residues: Small ribosomal subunit protein uS14 (61 aa).

Zn(2+) is bound by residues cysteine 24, cysteine 27, cysteine 40, and cysteine 43.

The protein belongs to the universal ribosomal protein uS14 family. Zinc-binding uS14 subfamily. In terms of assembly, part of the 30S ribosomal subunit. Contacts proteins S3 and S10. The cofactor is Zn(2+).

Binds 16S rRNA, required for the assembly of 30S particles and may also be responsible for determining the conformation of the 16S rRNA at the A site. The sequence is that of Small ribosomal subunit protein uS14 from Geobacter sp. (strain M21).